The sequence spans 765 residues: Zinc transporter ZIP6 (765 aa).

Residues 1–20 form the signal peptide; the sequence is MATDLSVIMILTFALWVTSP. Residues 21–335 are Extracellular-facing; that stretch reads LHELQSTAAF…PKTYSLQIAW (315 aa). An N-linked (GlcNAc...) asparagine glycan is attached at N68. 2 stretches are compositionally biased toward basic and acidic residues: residues 96-135 and 174-186; these read DHEH…DHEH and RPAE…RNIK. Disordered regions lie at residues 96-196 and 209-257; these read DHEH…EVTS and VETI…SEPR. The span at 187–196 shows a compositional bias: low complexity; sequence ESASSSEVTS. Over residues 224–233 the composition is skewed to polar residues; sequence VNPSTPPSIT. Over residues 238-247 the composition is skewed to basic residues; it reads VGRLSRLARK. Over residues 248 to 257 the composition is skewed to basic and acidic residues; it reads KSNESVSEPR. Residues N250, N275, and N292 are each glycosylated (N-linked (GlcNAc...) asparagine). A helical transmembrane segment spans residues 336 to 356; that stretch reads LGGFIAISIISFLSLLGVILV. Over 357–365 the chain is Cytoplasmic; it reads PLMNRVFFK. Residues 366–386 traverse the membrane as a helical segment; sequence FLLSFLVALAVGTLSGDALLH. Over 387–433 the chain is Extracellular; the sequence is LLPHSHASHQHSHSHEEPAMEMKRGPLFSHLSAQNIEESSYFDSTWK. The helical transmembrane segment at 434–454 threads the bilayer; that stretch reads GLTALGGLYFMFLVEHVLTLI. Over 455-667 the chain is Cytoplasmic; that stretch reads KQFKDKKKKN…LKAGMTVKQA (213 aa). The tract at residues 458 to 519 is disordered; that stretch reads KDKKKKNQKK…EPSPFDSQQP (62 aa). A coiled-coil region spans residues 475-495; the sequence is ESKKQLSKYDSQLSSNEEKVD. 2 positions are modified to phosphoserine: S481 and S488. The segment covering 490-508 has biased composition (basic and acidic residues); it reads NEEKVDPGERPESYLRADS. Polar residues predominate over residues 509 to 519; sequence QEPSPFDSQQP. The helical transmembrane segment at 668–688 threads the bilayer; the sequence is VLYNALSAMLAYLGMATGIFI. The Extracellular segment spans residues 689–696; that stretch reads GHYAENVS. A glycan (N-linked (GlcNAc...) asparagine) is linked at N694. A helical transmembrane segment spans residues 697-717; sequence MWIFALTAGLFMYVALVDMVP. The Cytoplasmic segment spans residues 718–734; that stretch reads EMLHNDASDHGCSRWGY. A helical transmembrane segment spans residues 735–755; it reads FFLQNAGILLGFGIMLLISIF. Residues 756–765 lie on the Extracellular side of the membrane; it reads EHKIVFRINF.

This sequence belongs to the ZIP transporter (TC 2.A.5) family. In terms of assembly, interacts with SLC39A10; which triggers cells to undergo EMT and mitosis. Found in a complex with SLC39A6, SLC39A10 and with the 'Ser-727' phosphorylated form of STAT3 throughout mitosis. Found in a complex with SLC39A6, SLC39A10 and with NCAM1; this complex controls NCAM1 phosphorylation and integration into focal adhesion complexes during epithelial-to-mesenchymal transition (EMT). Found in a complex with SLC39A6, SLC39A10 and with GSK3B that controls NCAM1 phosphorylation. Cleaved on the N-terminus before locating to the plasma membrane. Post-translationally, N-glycosylated. In terms of processing, phosphorylated by ZAP70 in response to TCR stimulation leading to its activation. Highly expressed in the brain and testis. In the brain strongly expressed in the CA1 and CA3 regions, Purkinje cells in cerebellum and dentate gyrus in hippocampus. In testis found in spermatids or mature sperms in the central areas of seminiferous tubules.

Its subcellular location is the cell membrane. It localises to the cell projection. It is found in the lamellipodium membrane. The protein localises to the membrane raft. The protein resides in the apical cell membrane. It carries out the reaction Zn(2+)(in) = Zn(2+)(out). Functionally, zinc-influx transporter which plays a role in zinc homeostasis and in the induction of epithelial-to-mesenchymal transition (EMT). When associated with SLC39A10, the heterodimer formed by SLC39A10 and SLC39A6 mediates cellular zinc uptake to trigger cells to undergo epithelial- to-mesenchymal transition (EMT). The SLC39A10-SLC39A6 heterodimer also controls NCAM1 phosphorylation and its integration into focal adhesion complexes during EMT. Zinc influx inactivates GSK3B, enabling unphosphorylated SNAI1 in the nucleus to down-regulate adherence genes such as E-cadherin, causing loss of cell adherence. In addition, the SLC39A10-SLC39A6 heterodimer plays an essentiel role in initiating mitosis by importing zinc into cells to initiate a pathway resulting in the onset of mitosis. Participates in the T-cell receptor signaling regulation by mediating cellular zinc uptake into activated lymphocytes. Regulates the zinc influx necessary for proper meiotic progression to metaphase II (MII) that allows the oocyte-to-egg transition. This chain is Zinc transporter ZIP6, found in Mus musculus (Mouse).